We begin with the raw amino-acid sequence, 167 residues long: NADH-quinone oxidoreductase subunit B 1 (167 aa).

[4Fe-4S] cluster is bound by residues C38, C39, C104, and C133.

This sequence belongs to the complex I 20 kDa subunit family. As to quaternary structure, NDH-1 is composed of 14 different subunits. Subunits NuoB, C, D, E, F, and G constitute the peripheral sector of the complex. The cofactor is [4Fe-4S] cluster.

It localises to the cell membrane. It carries out the reaction a quinone + NADH + 5 H(+)(in) = a quinol + NAD(+) + 4 H(+)(out). In terms of biological role, NDH-1 shuttles electrons from NADH, via FMN and iron-sulfur (Fe-S) centers, to quinones in the respiratory chain. The immediate electron acceptor for the enzyme in this species is believed to be ubiquinone. Couples the redox reaction to proton translocation (for every two electrons transferred, four hydrogen ions are translocated across the cytoplasmic membrane), and thus conserves the redox energy in a proton gradient. In Roseiflexus castenholzii (strain DSM 13941 / HLO8), this protein is NADH-quinone oxidoreductase subunit B 1.